A 171-amino-acid polypeptide reads, in one-letter code: Co-chaperone protein HscB (171 aa).

One can recognise a J domain in the interval Asp-2–Leu-74.

It belongs to the HscB family. In terms of assembly, interacts with HscA and stimulates its ATPase activity. Interacts with IscU.

In terms of biological role, co-chaperone involved in the maturation of iron-sulfur cluster-containing proteins. Seems to help targeting proteins to be folded toward HscA. The polypeptide is Co-chaperone protein HscB (Klebsiella pneumoniae (strain 342)).